We begin with the raw amino-acid sequence, 70 residues long: Protein SlyX homolog (70 aa).

It belongs to the SlyX family.

The sequence is that of Protein SlyX homolog from Rhizobium meliloti (strain 1021) (Ensifer meliloti).